The primary structure comprises 731 residues: Endopolyphosphatase (731 aa).

Residues 1-4 (MSLS) lie on the Cytoplasmic side of the membrane. The helical; Signal-anchor for type II membrane protein transmembrane segment at 5-25 (RCILGLACLWHGVIASPLGAV) threads the bilayer. Topologically, residues 26 to 731 (PSNIPIATDL…VEKEDLKKFT (706 aa)) are vacuolar. A glycan (N-linked (GlcNAc...) asparagine) is linked at N106. Residues 375–403 (KLQPPPTDSKNSGQLKKGKKGRKGKKKKP) form a disordered region. The segment covering 390–402 (KKGKKGRKGKKKK) has biased composition (basic residues). N433 carries an N-linked (GlcNAc...) asparagine glycan. The interval 456 to 522 (EQNDRQKHLD…PPGPAYSPQP (67 aa)) is disordered. 2 stretches are compositionally biased toward basic and acidic residues: residues 457-474 (QNDR…PSHM) and 492-501 (GGDSKPKKPD). Over residues 505–519 (PHPPAKSSPPGPAYS) the composition is skewed to pro residues. 2 N-linked (GlcNAc...) asparagine glycosylation sites follow: N534 and N540. The segment at 626–706 (AKSIDVSYES…HKKKKGKKRQ (81 aa)) is disordered. The segment covering 636–686 (AAEEEEEEEEEEEEDLFEEVEETDEEEEQEDDDLSDGEEVDDDSDEDELET) has biased composition (acidic residues). Positions 691–706 (KHDKKKHKKKKGKKRQ) are enriched in basic residues.

It belongs to the endopolyphosphatase PPN1 family. Requires a divalent metal cation as cofactor. Post-translationally, processing by proteases in the vacuole may be required for activation.

It localises to the vacuole membrane. The catalysed reaction is [phosphate](n+1) + n H2O = (n+1) phosphate + n H(+). Functionally, catalyzes the hydrolysis of inorganic polyphosphate (polyP) chains of many hundreds of phosphate residues into shorter lengths. The polypeptide is Endopolyphosphatase (epp-1) (Neurospora crassa (strain ATCC 24698 / 74-OR23-1A / CBS 708.71 / DSM 1257 / FGSC 987)).